The chain runs to 187 residues: Ribosome-recycling factor (187 aa).

The protein belongs to the RRF family.

Its subcellular location is the cytoplasm. Functionally, responsible for the release of ribosomes from messenger RNA at the termination of protein biosynthesis. May increase the efficiency of translation by recycling ribosomes from one round of translation to another. This chain is Ribosome-recycling factor, found in Nitrobacter winogradskyi (strain ATCC 25391 / DSM 10237 / CIP 104748 / NCIMB 11846 / Nb-255).